Here is a 479-residue protein sequence, read N- to C-terminus: Anaerobic nitric oxide reductase flavorubredoxin (479 aa).

Residues 30–210 (LRGSSYNSYL…PFSRLVTPKI (181 aa)) are zinc metallo-hydrolase. Residues H79, E81, D83, H147, D166, and H227 each coordinate Fe cation. Residues 254–393 (ITIFYDTMSN…LCRQHGRDIA (140 aa)) enclose the Flavodoxin-like domain. FMN contacts are provided by residues 260-264 (TMSNN) and 342-369 (AFGS…EMSL). The Rubredoxin-like domain maps to 423-474 (GPKMQCSVCQWIYDPAQGEPLQDVAPGTPWSDVPDNFLCPECSLGKDVFDVL). Fe cation-binding residues include C428, C431, C461, and C464.

The protein in the N-terminal section; belongs to the zinc metallo-hydrolase group 3 family. In terms of assembly, homotetramer. Fe cation serves as cofactor. The cofactor is FMN.

It is found in the cytoplasm. The protein operates within nitrogen metabolism; nitric oxide reduction. In terms of biological role, anaerobic nitric oxide reductase; uses NADH to detoxify nitric oxide (NO), protecting several 4Fe-4S NO-sensitive enzymes. Has at least 2 reductase partners, only one of which (NorW, flavorubredoxin reductase) has been identified. NO probably binds to the di-iron center; electrons enter from the NorW at rubredoxin and are transferred sequentially to the FMN center and the di-iron center. Also able to function as an aerobic oxygen reductase. The protein is Anaerobic nitric oxide reductase flavorubredoxin of Salmonella choleraesuis (strain SC-B67).